The sequence spans 217 residues: Urease accessory protein UreG (217 aa).

The span at 1–18 shows a compositional bias: basic residues; the sequence is MNAPHHPAHSTVRTKKLP. Residues 1 to 24 form a disordered region; the sequence is MNAPHHPAHSTVRTKKLPPLRVGV. 26 to 33 is a GTP binding site; the sequence is GPVGSGKT.

The protein belongs to the SIMIBI class G3E GTPase family. UreG subfamily. In terms of assembly, homodimer. UreD, UreF and UreG form a complex that acts as a GTP-hydrolysis-dependent molecular chaperone, activating the urease apoprotein by helping to assemble the nickel containing metallocenter of UreC. The UreE protein probably delivers the nickel.

The protein resides in the cytoplasm. Facilitates the functional incorporation of the urease nickel metallocenter. This process requires GTP hydrolysis, probably effectuated by UreG. The polypeptide is Urease accessory protein UreG (Paraburkholderia xenovorans (strain LB400)).